We begin with the raw amino-acid sequence, 253 residues long: Transcription factor bHLH106 (253 aa).

The 50-residue stretch at 66 to 115 (AALRNHKEAERRRRERINSHLNKLRNVLSCNSKTDKATLLAKVVQRVREL) folds into the bHLH domain.

As to quaternary structure, homodimer.

It localises to the nucleus. In Arabidopsis thaliana (Mouse-ear cress), this protein is Transcription factor bHLH106 (BHLH106).